A 63-amino-acid polypeptide reads, in one-letter code: MGRIRQTFIKRTGEELIEKFAGKFTSDFEANKKAVEEVARISTKTLRNRIAGYITAKVKKMNA.

Belongs to the eukaryotic ribosomal protein eS17 family.

The sequence is that of Small ribosomal subunit protein eS17 from Methanococcus vannielii (strain ATCC 35089 / DSM 1224 / JCM 13029 / OCM 148 / SB).